A 345-amino-acid chain; its full sequence is Phosphoribosylformylglycinamidine cyclo-ligase (345 aa).

It belongs to the AIR synthase family.

Its subcellular location is the cytoplasm. The enzyme catalyses 2-formamido-N(1)-(5-O-phospho-beta-D-ribosyl)acetamidine + ATP = 5-amino-1-(5-phospho-beta-D-ribosyl)imidazole + ADP + phosphate + H(+). Its pathway is purine metabolism; IMP biosynthesis via de novo pathway; 5-amino-1-(5-phospho-D-ribosyl)imidazole from N(2)-formyl-N(1)-(5-phospho-D-ribosyl)glycinamide: step 2/2. The sequence is that of Phosphoribosylformylglycinamidine cyclo-ligase from Salmonella choleraesuis (strain SC-B67).